A 307-amino-acid polypeptide reads, in one-letter code: Probable GTP 3',8-cyclase (307 aa).

The Radical SAM core domain maps to Ala5–Ala227. Arg14 serves as a coordination point for GTP. Residues Cys21 and Cys25 each coordinate [4Fe-4S] cluster. Position 27 (Tyr27) interacts with S-adenosyl-L-methionine. [4Fe-4S] cluster is bound at residue Cys28. GTP is bound at residue Lys61. Gly65 contacts S-adenosyl-L-methionine. Thr89 provides a ligand contact to GTP. Ser113 is an S-adenosyl-L-methionine binding site. Residue Lys151 participates in GTP binding. Cys241 and Cys244 together coordinate [4Fe-4S] cluster. GTP is bound at residue Arg246–Arg248. Cys258 contacts [4Fe-4S] cluster.

This sequence belongs to the radical SAM superfamily. MoaA family. [4Fe-4S] cluster is required as a cofactor.

It carries out the reaction GTP + AH2 + S-adenosyl-L-methionine = (8S)-3',8-cyclo-7,8-dihydroguanosine 5'-triphosphate + 5'-deoxyadenosine + L-methionine + A + H(+). The protein operates within cofactor biosynthesis; molybdopterin biosynthesis. Catalyzes the cyclization of GTP to (8S)-3',8-cyclo-7,8-dihydroguanosine 5'-triphosphate. This Methanocella arvoryzae (strain DSM 22066 / NBRC 105507 / MRE50) protein is Probable GTP 3',8-cyclase.